Here is a 1333-residue protein sequence, read N- to C-terminus: Xanthine dehydrogenase/oxidase (1333 aa).

The 2Fe-2S ferredoxin-type domain occupies 4 to 91; the sequence is DKLVFFVNGR…HVAVTTVEGI (88 aa). Cys43, Cys48, Cys51, Cys73, Cys113, Cys116, Cys148, and Cys150 together coordinate [2Fe-2S] cluster. Residues 229–414 form the FAD-binding PCMH-type domain; the sequence is FEGERVTWIQ…LSIEIPYSRE (186 aa). FAD-binding positions include 257 to 264, Phe337, 347 to 351, Asp360, Leu404, and Lys422; these read LVVGNTEI and SVGGN. Cystine bridges form between Cys509-Cys1318 and Cys536-Cys993. 2 residues coordinate Mo-molybdopterin: Gln768 and Phe799. Substrate-binding residues include Glu803 and Arg881. A Mo-molybdopterin-binding site is contributed by Arg913. Residues Phe915 and Thr1011 each coordinate substrate. Residue Ala1080 coordinates Mo-molybdopterin. Glu1262 functions as the Proton acceptor in the catalytic mechanism.

This sequence belongs to the xanthine dehydrogenase family. In terms of assembly, homodimer. Interacts with BTN1A1. Requires [2Fe-2S] cluster as cofactor. The cofactor is FAD. Mo-molybdopterin is required as a cofactor. In terms of processing, subject to partial proteolysis; this alters the enzyme from the dehydrogenase form (D) to the oxidase form (O). Post-translationally, contains sulfhydryl groups that are easily oxidized (in vitro); this alters the enzyme from the dehydrogenase form (D) to the oxidase form (O). As to expression, detected in milk (at protein level).

It localises to the cytoplasm. The protein resides in the peroxisome. It is found in the secreted. The enzyme catalyses xanthine + NAD(+) + H2O = urate + NADH + H(+). The catalysed reaction is hypoxanthine + NAD(+) + H2O = xanthine + NADH + H(+). It catalyses the reaction xanthine + O2 + H2O = urate + H2O2. Can be converted from the dehydrogenase form (D) to the oxidase form (O) irreversibly by proteolysis or reversibly through the oxidation of sulfhydryl groups. In terms of biological role, key enzyme in purine degradation. Catalyzes the oxidation of hypoxanthine to xanthine. Catalyzes the oxidation of xanthine to uric acid. Contributes to the generation of reactive oxygen species. Has also low oxidase activity towards aldehydes (in vitro). This chain is Xanthine dehydrogenase/oxidase (XDH), found in Homo sapiens (Human).